The primary structure comprises 1317 residues: DNA-directed RNA polymerase subunit beta' (1317 aa).

Zn(2+) is bound by residues C60, C62, C75, and C78. The segment at 183 to 209 (ELEDEGAKSDVKRKVRDGGEREMRQLR) is disordered. Mg(2+)-binding residues include D535, D537, and D539. C890, C967, C974, and C977 together coordinate Zn(2+).

Belongs to the RNA polymerase beta' chain family. As to quaternary structure, the RNAP catalytic core consists of 2 alpha, 1 beta, 1 beta' and 1 omega subunit. When a sigma factor is associated with the core the holoenzyme is formed, which can initiate transcription. The cofactor is Mg(2+). Zn(2+) serves as cofactor.

It carries out the reaction RNA(n) + a ribonucleoside 5'-triphosphate = RNA(n+1) + diphosphate. DNA-dependent RNA polymerase catalyzes the transcription of DNA into RNA using the four ribonucleoside triphosphates as substrates. This chain is DNA-directed RNA polymerase subunit beta', found in Mycolicibacterium vanbaalenii (strain DSM 7251 / JCM 13017 / BCRC 16820 / KCTC 9966 / NRRL B-24157 / PYR-1) (Mycobacterium vanbaalenii).